The primary structure comprises 27 residues: Cupiennin-3a (27 aa).

Glutamic acid 1-amide is present on E27.

As to expression, expressed by the venom gland.

The protein resides in the secreted. The protein is Cupiennin-3a of Cupiennius salei (American wandering spider).